The following is a 1703-amino-acid chain: Mediator of RNA polymerase II transcription subunit 14 (1703 aa).

The span at 755–766 shows a compositional bias: polar residues; sequence LSQTADLATSSA. The disordered stretch occupies residues 755 to 781; the sequence is LSQTADLATSSAGPLLRKDQKPRKRSA.

This sequence belongs to the Mediator complex subunit 14 family. In terms of assembly, component of the Mediator complex. Interacts with CDKE-1, HDA19 and LUG. Interacts with PTAC12/HMR/PAP5 and PIF4. As to expression, expressed in roots, stems, developing embryos, young leaf primordia, shoot apical meristems, inflorescence meristems, tapetum in anthers, ovules and floral organ primordia, but not in mature organs.

Its subcellular location is the nucleus. Component of the Mediator complex, a coactivator involved in the regulated transcription of nearly all RNA polymerase II-dependent genes. Mediator functions as a bridge to convey information from gene-specific regulatory proteins to the basal RNA polymerase II transcription machinery. The Mediator complex, having a compact conformation in its free form, is recruited to promoters by direct interactions with regulatory proteins and serves for the assembly of a functional pre-initiation complex with RNA polymerase II and the general transcription factors. Binds to G-box (5'-CACGTG-3')-containing regions of target genes promoters (e.g. IAA29 and IAA19). Involved in defining the duration of cell proliferation. Element of a PIF4/HMR/MED14-dependent thermoresponsive process; required for thermomorphogenetic hypocotyl growth in response to daytime warm temperature elicitation by associating to the promoters of thermoresponsive growth-relevant genes (e.g. mainly involved in biosynthesis and signaling of the phytohormone auxin); this also process implies PIF4 and its transcriptional coactivator PTAC12/HMR/PAP5 to promote the expression of target genes. The chain is Mediator of RNA polymerase II transcription subunit 14 from Arabidopsis thaliana (Mouse-ear cress).